Reading from the N-terminus, the 162-residue chain is Sorting nexin-12 (162 aa).

The interval 1–20 is disordered; it reads MSDTAVADTRRLNSKPQDLT. Position 2 is an N-acetylserine (Ser-2). Phosphotyrosine is present on Tyr-23. The PX domain maps to 28–152; the sequence is NFLEIDIFNP…HMFLQEEAID (125 aa). Arg-71, Ser-73, Lys-96, and Arg-119 together coordinate a 1,2-diacyl-sn-glycero-3-phospho-(1D-myo-inositol-3-phosphate). Ser-73 is modified (phosphoserine).

Belongs to the sorting nexin family.

It is found in the membrane. Functionally, may be involved in several stages of intracellular trafficking. The sequence is that of Sorting nexin-12 (SNX12) from Homo sapiens (Human).